The chain runs to 459 residues: Light-independent protochlorophyllide reductase subunit N (459 aa).

[4Fe-4S] cluster is bound by residues Cys-22, Cys-47, and Cys-107.

It belongs to the BchN/ChlN family. Protochlorophyllide reductase is composed of three subunits; ChlL, ChlN and ChlB. Forms a heterotetramer of two ChlB and two ChlN subunits. The cofactor is [4Fe-4S] cluster.

The protein resides in the plastid. The protein localises to the chloroplast. It carries out the reaction chlorophyllide a + oxidized 2[4Fe-4S]-[ferredoxin] + 2 ADP + 2 phosphate = protochlorophyllide a + reduced 2[4Fe-4S]-[ferredoxin] + 2 ATP + 2 H2O. Its pathway is porphyrin-containing compound metabolism; chlorophyll biosynthesis (light-independent). In terms of biological role, component of the dark-operative protochlorophyllide reductase (DPOR) that uses Mg-ATP and reduced ferredoxin to reduce ring D of protochlorophyllide (Pchlide) to form chlorophyllide a (Chlide). This reaction is light-independent. The NB-protein (ChlN-ChlB) is the catalytic component of the complex. The chain is Light-independent protochlorophyllide reductase subunit N from Pinus contorta (Shore pine).